Consider the following 30-residue polypeptide: Dicynthaurin (30 aa).

A Threonine amide modification is found at T30.

In terms of assembly, homodimer.

Its subcellular location is the secreted. Functionally, shows antibacterial activity against both Gram-positive and Gram-negative bacteria. Its antimicrobial activity is optimal at NaCl concentrations below 100 mM, suggesting that the antimicrobial actions of this peptide may take place intracellularly rather than extracellularly. Has no activity against the fungus C.albicans. Has modest hemolytic activity. The sequence is that of Dicynthaurin from Halocynthia aurantium (Sea peach).